A 405-amino-acid chain; its full sequence is Tryptophan synthase beta chain (405 aa).

The residue at position 98 (K98) is an N6-(pyridoxal phosphate)lysine.

This sequence belongs to the TrpB family. As to quaternary structure, tetramer of two alpha and two beta chains. It depends on pyridoxal 5'-phosphate as a cofactor.

The catalysed reaction is (1S,2R)-1-C-(indol-3-yl)glycerol 3-phosphate + L-serine = D-glyceraldehyde 3-phosphate + L-tryptophan + H2O. It participates in amino-acid biosynthesis; L-tryptophan biosynthesis; L-tryptophan from chorismate: step 5/5. Functionally, the beta subunit is responsible for the synthesis of L-tryptophan from indole and L-serine. This is Tryptophan synthase beta chain from Xylella fastidiosa (strain M12).